The chain runs to 242 residues: Response regulator GtcR (242 aa).

Residues 4–117 (TILIADDEPE…EAVARIQAQL (114 aa)) form the Response regulatory domain. D53 bears the 4-aspartylphosphate mark. The ompR/PhoB-type DNA-binding region spans 133–233 (TQSTTVGRLT…VRGLGYKFAS (101 aa)).

Post-translationally, phosphorylated by GtcS.

In terms of biological role, member of the two-component regulatory system GtcS/GtcR which may act in the control of the transcription of the grs operon which encodes the multienzymes involved in the biosynthesis of the peptide antibiotic gramicidin S. The protein is Response regulator GtcR (gtcR) of Aneurinibacillus migulanus (Bacillus migulanus).